Consider the following 717-residue polypeptide: Inhibitor of nuclear factor kappa-B kinase subunit epsilon (717 aa).

Positions 9-315 (WHTDDLLGQG…LQRTVIHVFS (307 aa)) constitute a Protein kinase domain. 15–23 (LGQGATASV) lines the ATP pocket. A Glycyl lysine isopeptide (Lys-Gly) (interchain with G-Cter in ubiquitin) cross-link involves residue Lys-30. Residue Lys-38 coordinates ATP. Asp-135 serves as the catalytic Proton acceptor. Phosphoserine; by autocatalysis and IKKB is present on Ser-172. A Glycyl lysine isopeptide (Lys-Gly) (interchain with G-Cter in SUMO1) cross-link involves residue Lys-231. The tract at residues 385-650 (SSDTPKGLAF…AQESLNKIFD (266 aa)) is interaction with DDX3X. Lys-403 participates in a covalent cross-link: Glycyl lysine isopeptide (Lys-Gly) (interchain with G-Cter in ubiquitin). The segment at 452–473 (LQDTCQQTLEVTRTALLYLSSS) is leucine-zipper. Thr-503 bears the Phosphothreonine mark. Ser-665 is subject to Phosphoserine.

This sequence belongs to the protein kinase superfamily. Ser/Thr protein kinase family. I-kappa-B kinase subfamily. Homodimer. Interacts with MAVS/IPS1. Interacts (via protein kinase domain) with TTLL12 (via N-terminus); the interaction prevents MAVS binding to IKBKE. Interacts with the adapter proteins AZI2/NAP1, TANK and TBKBP1/SINTBAD. Interacts with SIKE1. Interacts with TICAM1/TRIF, IRF3 and RIGI; interactions are disrupted by the interaction between IKBKE and SIKE1. Interacts with TOPORS; induced by DNA damage. Interacts with CYLD, IKBKB, IKBKG and MYD88. Interacts with IFIH1. Interacts with DDX3X; the interaction may be induced upon virus infection. Interacts with TRIM6 (via SPRY box). Interacts with unanchored K48-linked polyubiquitin chains; this leads to IKBKE activation. Interacts with TBK1. Interacts with FKBP5. Sumoylation by TOPORS upon DNA damage is required for protection of cells against DNA damage-induced cell death. Desumoylated by SENP1. In terms of processing, autophosphorylated and phosphorylated by IKBKB/IKKB. Phosphorylation at Ser-172 is enhanced by the interaction with DDX3X. Phosphorylated at Thr-503 upon IFN activation. Post-translationally, 'Lys-63'-linked polyubiquitinated at Lys-30 and Lys-403 by TRAF2:BIRC2 and TRAF2:BIRC3 complexes. Ubiquitination is induced by LPS, TNFA and interleukin-1 and required for full kinase activity and KF-kappa-B pathway activation. In terms of tissue distribution, expressed in bone marrow-derived macrophages and at low levels in liver and white adipose tissue (at protein level). Detected in muscle and lung.

It is found in the cytoplasm. The protein resides in the nucleus. It localises to the PML body. It catalyses the reaction L-seryl-[I-kappa-B protein] + ATP = O-phospho-L-seryl-[I-kappa-B protein] + ADP + H(+). Its activity is regulated as follows. Kinase activity is inhibited competitively by amlexanox. Serine/threonine kinase that plays an essential role in regulating inflammatory responses to viral infection, through the activation of the type I IFN, NF-kappa-B and STAT signaling. Also involved in TNFA and inflammatory cytokines, like Interleukin-1, signaling. Following activation of viral RNA sensors, such as RIG-I-like receptors, associates with DDX3X and phosphorylates interferon regulatory factors (IRFs), IRF3 and IRF7, as well as DDX3X. This activity allows subsequent homodimerization and nuclear translocation of the IRF3 leading to transcriptional activation of pro-inflammatory and antiviral genes including IFNB. In order to establish such an antiviral state, IKBKE forms several different complexes whose composition depends on the type of cell and cellular stimuli. Thus, several scaffolding molecules including IPS1/MAVS, TANK, AZI2/NAP1 or TBKBP1/SINTBAD can be recruited to the IKBKE-containing-complexes. Activated by polyubiquitination in response to TNFA and interleukin-1, regulates the NF-kappa-B signaling pathway through, at least, the phosphorylation of CYLD. Phosphorylates inhibitors of NF-kappa-B thus leading to the dissociation of the inhibitor/NF-kappa-B complex and ultimately the degradation of the inhibitor. In addition, is also required for the induction of a subset of ISGs which displays antiviral activity, may be through the phosphorylation of STAT1 at 'Ser-708'. Phosphorylation of STAT1 at 'Ser-708' also seems to promote the assembly and DNA binding of ISGF3 (STAT1:STAT2:IRF9) complexes compared to GAF (STAT1:STAT1) complexes, in this way regulating the balance between type I and type II IFN responses. Protects cells against DNA damage-induced cell death. Also plays an important role in energy balance regulation by sustaining a state of chronic, low-grade inflammation in obesity, wich leads to a negative impact on insulin sensitivity. Phosphorylates AKT1. The polypeptide is Inhibitor of nuclear factor kappa-B kinase subunit epsilon (Ikbke) (Mus musculus (Mouse)).